The following is an 864-amino-acid chain: Leucine--tRNA ligase (864 aa).

Positions 42–52 (PYPSGKLHMGH) match the 'HIGH' region motif. The 'KMSKS' region signature appears at 624–628 (KMSKS). K627 contributes to the ATP binding site.

Belongs to the class-I aminoacyl-tRNA synthetase family.

The protein localises to the cytoplasm. The catalysed reaction is tRNA(Leu) + L-leucine + ATP = L-leucyl-tRNA(Leu) + AMP + diphosphate. This Burkholderia cenocepacia (strain HI2424) protein is Leucine--tRNA ligase.